The following is a 295-amino-acid chain: Hepatic leukemia factor (295 aa).

Residues 36–52 show a composition bias toward basic and acidic residues; that stretch reads PEDAFSKEKDKGKKLDD. Disordered stretches follow at residues 36 to 76 and 92 to 149; these read PEDA…TLPY and LSEN…SPIR. In terms of domain architecture, bZIP spans 225–288; it reads DDKYWARRRK…GKCKNILAKY (64 aa). Residues 227–247 are basic motif; it reads KYWARRRKNNMAAKRSRDARR. Residues 248-255 are leucine-zipper; it reads LKENQIAI.

It belongs to the bZIP family. PAR subfamily. Binds DNA specifically as homodimer or heterodimer with other PAR factors.

The protein resides in the nucleus. This Mus musculus (Mouse) protein is Hepatic leukemia factor (Hlf).